The following is a 553-amino-acid chain: Muellerian-inhibiting factor (553 aa).

Positions Met1–Ala22 are cleaved as a signal peptide. The propeptide occupies Asp23–Arg445. Residues Asn325 and Asn409 are each glycosylated (N-linked (GlcNAc...) asparagine). 3 disulfides stabilise this stretch: Cys455–Cys519, Cys481–Cys550, and Cys485–Cys552.

Belongs to the TGF-beta family. As to quaternary structure, homodimer; disulfide-linked. In terms of processing, preproprotein is proteolytically processed to generate N- and C-terminal cleavage products that homodimerize and associate to form a biologically active non-covalent complex. Binding of the non-covalent complex to AMHR2 induces dissociation of the pro-region from the mature C-terminal dimer. The N-terminal portion of the protein, despite having no intrinsic activity, has the role of amplifying the activity of the C-terminus. In terms of tissue distribution, mainly expressed in granulosa cells from preantral and small antral follicles.

It is found in the secreted. Functionally, plays an important role in several reproductive functions. Induces Muellerian duct regression during male fetal sexual differentiation and plays a role in Leydig cell differentiation and function. In female acts as a negative regulator of the primordial to primary follicle transition and decreases FSH sensitivity of growing follicles. AMH signals by binding to a specific type-II receptor, AMHR2, that heterodimerizes with type-I receptors (ACVR1 and BMPR1A), and recruiting SMAD proteins that are translocated to the nucleus to regulate target gene expression. The chain is Muellerian-inhibiting factor (Amh) from Rattus norvegicus (Rat).